Here is a 120-residue protein sequence, read N- to C-terminus: Ribonuclease P protein component (120 aa).

This sequence belongs to the RnpA family. As to quaternary structure, consists of a catalytic RNA component (M1 or rnpB) and a protein subunit.

The enzyme catalyses Endonucleolytic cleavage of RNA, removing 5'-extranucleotides from tRNA precursor.. Functionally, RNaseP catalyzes the removal of the 5'-leader sequence from pre-tRNA to produce the mature 5'-terminus. It can also cleave other RNA substrates such as 4.5S RNA. The protein component plays an auxiliary but essential role in vivo by binding to the 5'-leader sequence and broadening the substrate specificity of the ribozyme. In Chelativorans sp. (strain BNC1), this protein is Ribonuclease P protein component.